Reading from the N-terminus, the 73-residue chain is Putative membrane protein insertion efficiency factor (73 aa).

The protein belongs to the UPF0161 family.

The protein localises to the cell inner membrane. Functionally, could be involved in insertion of integral membrane proteins into the membrane. In Rickettsia bellii (strain RML369-C), this protein is Putative membrane protein insertion efficiency factor.